Reading from the N-terminus, the 347-residue chain is GPN-loop GTPase 2 (347 aa).

12–17 (GSGKST) serves as a coordination point for GTP. The Gly-Pro-Asn (GPN)-loop; involved in dimer interface signature appears at 69 to 71 (GPN). 175-178 (SKID) contributes to the GTP binding site.

It belongs to the GPN-loop GTPase family. As to quaternary structure, heterodimers with NPA3/GPN1 or GPN3. Binds to RNA polymerase II (RNAPII).

The protein resides in the cytoplasm. Small GTPase required for proper localization of RNA polymerase II and III (RNAPII and RNAPIII). May act at an RNAP assembly step prior to nuclear import. Required for establishment of sister chromatid cohesion. This is GPN-loop GTPase 2 from Saccharomyces cerevisiae (strain ATCC 204508 / S288c) (Baker's yeast).